A 550-amino-acid chain; its full sequence is Sorting nexin-33 (550 aa).

The SH3 domain maps to 1–61; sequence MALKARALYS…PASYVEIQSS (61 aa). Residues 62–152 are disordered; it reads RSGSVQVDYS…QDSIASGKRG (91 aa). Residues 86–102 show a composition bias toward acidic residues; the sequence is YDDDDEEDDDDWDDWDD. The span at 128–144 shows a compositional bias: basic and acidic residues; sequence SRPEYSHRPRPALERQD. A PX domain is found at 206-316; the sequence is FNCSVEEPTK…HFLGCQDEKQ (111 aa). In terms of domain architecture, BAR spans 347-550; the sequence is LQDVEERVDV…EKTLHLYDEL (204 aa).

This sequence belongs to the sorting nexin family.

Its subcellular location is the cytoplasm. The protein resides in the cytosol. The protein localises to the membrane. It is found in the cytoplasmic vesicle membrane. Its function is as follows. Plays a role in the reorganization of the cytoskeleton, endocytosis and cellular vesicle trafficking, both during interphase and at the end of mitotic cell divisions. Required for efficient progress through mitosis and cytokinesis. Required for normal formation of the cleavage furrow at the end of mitosis. Modulates endocytosis of cell-surface proteins. Promotes membrane tubulation (in vitro). May promote the formation of macropinosomes. The sequence is that of Sorting nexin-33 (snx33) from Xenopus laevis (African clawed frog).